The following is a 91-amino-acid chain: Small ribosomal subunit protein bS16 (91 aa).

This sequence belongs to the bacterial ribosomal protein bS16 family.

This Limosilactobacillus reuteri (strain DSM 20016) (Lactobacillus reuteri) protein is Small ribosomal subunit protein bS16.